A 102-amino-acid polypeptide reads, in one-letter code: YcgL domain-containing protein MS1047 (102 aa).

The 85-residue stretch at 1-85 (MLCAIYKSKK…KQESLFEQFK (85 aa)) folds into the YcgL domain.

The sequence is that of YcgL domain-containing protein MS1047 from Mannheimia succiniciproducens (strain KCTC 0769BP / MBEL55E).